The following is a 240-amino-acid chain: Protein RoBo-1 (240 aa).

The first 26 residues, 1 to 26, serve as a signal peptide directing secretion; that stretch reads MSWFLVLKCLLTVCIISHLSVSSTES. An N-linked (GlcNAc...) asparagine glycan is attached at N42. 5 cysteine pairs are disulfide-bonded: C47-C76, C81-C102, C103-C108, C127-C151, and C144-C171. N-linked (GlcNAc...) asparagine glycosylation is present at N153.

The protein belongs to the CNF-like-inhibitor family. In terms of processing, N-glycosylated. As to expression, expressed abundantly in bone, including the lengthening growth plate where cartilage is remodeled into bone.

Its subcellular location is the secreted. Functionally, may play a novel role in the growth or remodeling of bone. The protein is Protein RoBo-1 of Rattus norvegicus (Rat).